Consider the following 467-residue polypeptide: Na(+)/H(+) exchange regulatory cofactor-like protein nrfl-1 (467 aa).

PDZ domains follow at residues 12–94 and 143–225; these read RLCV…ISEE and LAEL…ASED. A disordered region spans residues 344–429; it reads MSSHTEVLPP…ASSTSGYDDD (86 aa). The segment covering 407–425 has biased composition (polar residues); sequence PSPLSNGSSHGYAASSTSG.

Interacts (via PDZ 2 domain) with aat-6 (via PDZ-binding motif); the interaction sequesters aat-6 to the apical cell membrane of intestinal cells. Phosphorylated. In terms of tissue distribution, expressed in the excretory canal and intestine. Expressed on the apical cell membrane of intestinal cells (at protein level).

Its subcellular location is the cell projection. The protein localises to the microvillus membrane. It localises to the apical cell membrane. In terms of biological role, scaffold protein that connects plasma membrane proteins with members of the ezrin/moesin/radixin family and thereby helps to link them to the actin cytoskeleton and to regulate their surface expression. Anchors the amino acid transporter protein aat-6 to the apical cell membrane of intestinal cells, particularly in older animals, in order to maintain amino acid homeostasis. May play a role in promoting fertility. This is Na(+)/H(+) exchange regulatory cofactor-like protein nrfl-1 from Caenorhabditis elegans.